A 281-amino-acid polypeptide reads, in one-letter code: Energy-coupling factor transporter ATP-binding protein EcfA1 (281 aa).

In terms of domain architecture, ABC transporter spans 7-242 (IAAEDITFRY…NQDLIKIGLD (236 aa)). 42 to 49 (GHNGSGKS) is an ATP binding site.

The protein belongs to the ABC transporter superfamily. Energy-coupling factor EcfA family. Forms a stable energy-coupling factor (ECF) transporter complex composed of 2 membrane-embedded substrate-binding proteins (S component), 2 ATP-binding proteins (A component) and 2 transmembrane proteins (T component).

It localises to the cell membrane. ATP-binding (A) component of a common energy-coupling factor (ECF) ABC-transporter complex. Unlike classic ABC transporters this ECF transporter provides the energy necessary to transport a number of different substrates. This is Energy-coupling factor transporter ATP-binding protein EcfA1 from Bacillus licheniformis (strain ATCC 14580 / DSM 13 / JCM 2505 / CCUG 7422 / NBRC 12200 / NCIMB 9375 / NCTC 10341 / NRRL NRS-1264 / Gibson 46).